We begin with the raw amino-acid sequence, 85 residues long: Protein C4 (85 aa).

Gly-2 carries N-myristoyl glycine; by host lipidation. Residues 42-65 (LNPAPTSTPTSTRTETLSNGENSR) form a disordered region. Residues 44–59 (PAPTSTPTSTRTETLS) show a composition bias toward low complexity.

The protein belongs to the geminiviridae protein AC4/C4 family.

Its subcellular location is the host cell membrane. Functionally, pathogenicity determinant. May act as a suppressor of RNA-mediated gene silencing, also known as post-transcriptional gene silencing (PTGS), a mechanism of plant viral defense that limits the accumulation of viral RNAs. The polypeptide is Protein C4 (Solanum lycopersicum (Tomato)).